The primary structure comprises 196 residues: MSEKATEIANLLSPTVDSLGVELLGVEYLPAPGGATLRLYIDVPLAEQPERVINVDDCERVSREVSAQLDVEDPISGHYTLEVSSPGVDRPLFTLEQFARHAGESTKIVLKLAQDGRRRFQGEILRIDAEAGAVVFAIDGKDVQIGFDNIDKARILPDWVALGLAPQKPNKPGPKKTGHEKKKPSNESAAGKPRAE.

Residues 164–196 are disordered; the sequence is LAPQKPNKPGPKKTGHEKKKPSNESAAGKPRAE. Basic residues predominate over residues 173-182; sequence GPKKTGHEKK.

The protein belongs to the RimP family.

The protein localises to the cytoplasm. Functionally, required for maturation of 30S ribosomal subunits. The sequence is that of Ribosome maturation factor RimP from Xanthomonas oryzae pv. oryzae (strain MAFF 311018).